Reading from the N-terminus, the 197-residue chain is Probable GTP-binding protein EngB (197 aa).

One can recognise an EngB-type G domain in the interval 26–197; it reads DLPEIALAGR…TSWDAILESL (172 aa). GTP contacts are provided by residues 34-41, 61-65, 79-82, 146-149, and 178-180; these read GRSNVGKS, GKTQS, DVPG, TKAD, and FSS. 2 residues coordinate Mg(2+): Ser-41 and Thr-63.

Belongs to the TRAFAC class TrmE-Era-EngA-EngB-Septin-like GTPase superfamily. EngB GTPase family. It depends on Mg(2+) as a cofactor.

In terms of biological role, necessary for normal cell division and for the maintenance of normal septation. The protein is Probable GTP-binding protein EngB of Streptococcus mutans serotype c (strain ATCC 700610 / UA159).